The sequence spans 576 residues: uncharacterized protein (576 aa).

2 stretches are compositionally biased toward polar residues: residues 1 to 21 (MSTN…QSAS) and 28 to 40 (HTTS…TYQL). Residues 1–40 (MSTNPNAGIQPLTNSISQSASAHPELYHTTSHESVSTYQL) form a disordered region. The next 12 membrane-spanning stretches (helical) occupy residues 149–169 (FASS…HISL), 173–193 (LLTM…WAPL), 200–220 (KLPL…VAVA), 231–251 (FFSG…FADM), 261–281 (ITIF…IGGF), 291–311 (WTEY…YLFC), 366–386 (PIVF…YLLL), 401–421 (MGVA…GSAI), 446–466 (LPPM…LSWS), 472–492 (VHWI…LLIF), 503–525 (YLFR…AAGF), and 542–562 (GSLL…FFFF).

Belongs to the major facilitator superfamily. CAR1 family.

It localises to the endoplasmic reticulum. The protein localises to the golgi apparatus. It is found in the membrane. This is an uncharacterized protein from Schizosaccharomyces pombe (strain 972 / ATCC 24843) (Fission yeast).